Reading from the N-terminus, the 678-residue chain is Nucleolar protein 9 (678 aa).

Over residues 1-15 (MPRDKQKRGRRAEAK) the composition is skewed to basic residues. A disordered region spans residues 1–24 (MPRDKQKRGRRAEAKRKRDDVITD). 3 Pumilio repeats span residues 108-143 (EANG…RLFS), 291-334 (GLDN…SLLR), and 382-419 (KILV…SAMD). The segment at 477–496 (QRSNQESDGTTSSSNTSSPE) is disordered. Pumilio repeat units follow at residues 524-562 (AVTT…QITS) and 563-600 (RFSG…RFAE).

The protein localises to the nucleus. It localises to the nucleolus. In terms of biological role, RNA-binding nucleolar protein required for pre-rRNA processing. Involved in production of 18S rRNA and assembly of small ribosomal subunit. The protein is Nucleolar protein 9 (NOP9) of Paracoccidioides brasiliensis (strain Pb18).